Reading from the N-terminus, the 246-residue chain is Uridylate kinase (246 aa).

An ATP-binding site is contributed by 10 to 13 (KLSG). A UMP-binding site is contributed by glycine 52. Residues glycine 53 and arginine 57 each contribute to the ATP site. Residues aspartate 72 and 133-140 (TGNPFFTT) each bind UMP. ATP-binding residues include threonine 160, tyrosine 166, and aspartate 169.

It belongs to the UMP kinase family. Homohexamer.

The protein localises to the cytoplasm. The enzyme catalyses UMP + ATP = UDP + ADP. Its pathway is pyrimidine metabolism; CTP biosynthesis via de novo pathway; UDP from UMP (UMPK route): step 1/1. Its activity is regulated as follows. Inhibited by UTP. Its function is as follows. Catalyzes the reversible phosphorylation of UMP to UDP. This Halorhodospira halophila (strain DSM 244 / SL1) (Ectothiorhodospira halophila (strain DSM 244 / SL1)) protein is Uridylate kinase.